The sequence spans 256 residues: Ribonuclease 3 (256 aa).

The 123-residue stretch at 3-125 (LDALQQRLGY…IFGAVFLDGG (123 aa)) folds into the RNase III domain. Glu38 is a Mg(2+) binding site. Residue Asp42 is part of the active site. Mg(2+) is bound by residues Asp111 and Glu114. Residue Glu114 is part of the active site. A DRBM domain is found at 152–222 (DAKTLLQEYL…AKLALDEAHR (71 aa)). The segment at 226–256 (QLVKRSRAERTGKTRKQATPPDPQLSLRLKE) is disordered.

Belongs to the ribonuclease III family. In terms of assembly, homodimer. Mg(2+) is required as a cofactor.

Its subcellular location is the cytoplasm. The catalysed reaction is Endonucleolytic cleavage to 5'-phosphomonoester.. Its function is as follows. Digests double-stranded RNA. Involved in the processing of primary rRNA transcript to yield the immediate precursors to the large and small rRNAs (23S and 16S). Processes some mRNAs, and tRNAs when they are encoded in the rRNA operon. Processes pre-crRNA and tracrRNA of type II CRISPR loci if present in the organism. The polypeptide is Ribonuclease 3 (Ralstonia pickettii (strain 12J)).